Consider the following 130-residue polypeptide: Protein NrdI (130 aa).

The protein belongs to the NrdI family.

In terms of biological role, probably involved in ribonucleotide reductase function. The chain is Protein NrdI from Staphylococcus carnosus (strain TM300).